The following is an 89-amino-acid chain: Small ribosomal subunit protein uS15 (89 aa).

Belongs to the universal ribosomal protein uS15 family. Part of the 30S ribosomal subunit. Forms a bridge to the 50S subunit in the 70S ribosome, contacting the 23S rRNA.

Its function is as follows. One of the primary rRNA binding proteins, it binds directly to 16S rRNA where it helps nucleate assembly of the platform of the 30S subunit by binding and bridging several RNA helices of the 16S rRNA. Forms an intersubunit bridge (bridge B4) with the 23S rRNA of the 50S subunit in the ribosome. In Streptococcus pyogenes serotype M1, this protein is Small ribosomal subunit protein uS15.